Reading from the N-terminus, the 85-residue chain is uncharacterized protein (85 aa).

This is an uncharacterized protein from Escherichia coli (Bacteriophage T4).